Consider the following 395-residue polypeptide: uncharacterized protein (395 aa).

The first 18 residues, 1-18 (MKHVIMLYFIAAATLFSS), serve as a signal peptide directing secretion. Cys19 carries the N-palmitoyl cysteine lipid modification. A lipid anchor (S-diacylglycerol cysteine) is attached at Cys19.

The protein localises to the cell outer membrane. Its function is as follows. May be involved in ulvan degradation. Ulvan is the main polysaccharide component of the Ulvales (green seaweed) cell wall. It is composed of disaccharide building blocks comprising 3-sulfated rhamnose (Rha3S) linked to D-glucuronic acid (GlcA), L-iduronic acid (IduA), or D-xylose (Xyl). This is an uncharacterized protein from Formosa agariphila (strain DSM 15362 / KCTC 12365 / LMG 23005 / KMM 3901 / M-2Alg 35-1).